A 329-amino-acid polypeptide reads, in one-letter code: MTHLQAGLSPETLEKAKVELKENPDTLHQDIQEVRDMIITRPDIGFLRTDDAFILRFLRARKFNHFEAFRLLAQYFEYRQQNLDMFKNLKATDPGIKQALKDGFPGVLSNLDRYGRKILVLFAANWDQSRYTFVDILRAILLSLEAMIEDPELQVNGFVLIIDWSNFTFKQASKLTPSMLRLAIEGLQDSFPARFGGIHFVNQPWYIHALYTVIRPFLKDKTRKRIFMHGNNLNSLHQLILPEILPSELGGMLPPYDMGTWARTLLDHAYDEETDYCPESYTLSVKDLEKDLSPKTMKRSQSVVEPGVLKRPEKVKSEEENMQPLLSLD.

The CRAL-TRIO domain occupies 96-257; it reads IKQALKDGFP…ELGGMLPPYD (162 aa). A disordered region spans residues 293-329; it reads SPKTMKRSQSVVEPGVLKRPEKVKSEEENMQPLLSLD. The span at 308–319 shows a compositional bias: basic and acidic residues; it reads VLKRPEKVKSEE.

Its subcellular location is the golgi apparatus. It localises to the trans-Golgi network membrane. The protein localises to the early endosome membrane. The protein resides in the cytoplasmic vesicle. It is found in the clathrin-coated vesicle. Its function is as follows. Required for normal morphology of late endosomes and/or lysosomes in neurons. Binds phosphatidylinositol 3,5-bisphosphate (PtdIns(3,5)P2). This Danio rerio (Zebrafish) protein is Clavesin-2 (clvs2).